A 641-amino-acid chain; its full sequence is Threonine--tRNA ligase (641 aa).

In terms of domain architecture, TGS spans 1–61 (MPAITLPDGS…ADDASVRFIT (61 aa)). A catalytic region spans residues 243 to 536 (DHRRIGREMD…LIEQHAGRFP (294 aa)). C336, H387, and H513 together coordinate Zn(2+).

It belongs to the class-II aminoacyl-tRNA synthetase family. In terms of assembly, homodimer. Requires Zn(2+) as cofactor.

The protein resides in the cytoplasm. It catalyses the reaction tRNA(Thr) + L-threonine + ATP = L-threonyl-tRNA(Thr) + AMP + diphosphate + H(+). Catalyzes the attachment of threonine to tRNA(Thr) in a two-step reaction: L-threonine is first activated by ATP to form Thr-AMP and then transferred to the acceptor end of tRNA(Thr). Also edits incorrectly charged L-seryl-tRNA(Thr). The polypeptide is Threonine--tRNA ligase (Gluconacetobacter diazotrophicus (strain ATCC 49037 / DSM 5601 / CCUG 37298 / CIP 103539 / LMG 7603 / PAl5)).